Consider the following 511-residue polypeptide: 2-isopropylmalate synthase (511 aa).

The Pyruvate carboxyltransferase domain occupies 5 to 267 (LIIFDTTLRD…DTDINATHIL (263 aa)). The Mn(2+) site is built by aspartate 14, histidine 202, histidine 204, and asparagine 238. A regulatory domain region spans residues 392 to 511 (KLVSLKVCTE…ATNKAQHPQI (120 aa)).

The protein belongs to the alpha-IPM synthase/homocitrate synthase family. LeuA type 1 subfamily. As to quaternary structure, homodimer. Mn(2+) serves as cofactor.

Its subcellular location is the cytoplasm. The enzyme catalyses 3-methyl-2-oxobutanoate + acetyl-CoA + H2O = (2S)-2-isopropylmalate + CoA + H(+). It participates in amino-acid biosynthesis; L-leucine biosynthesis; L-leucine from 3-methyl-2-oxobutanoate: step 1/4. Catalyzes the condensation of the acetyl group of acetyl-CoA with 3-methyl-2-oxobutanoate (2-ketoisovalerate) to form 3-carboxy-3-hydroxy-4-methylpentanoate (2-isopropylmalate). The sequence is that of 2-isopropylmalate synthase from Ruthia magnifica subsp. Calyptogena magnifica.